Reading from the N-terminus, the 788-residue chain is Cyclin-F (788 aa).

A Nuclear localization signal 1 motif is present at residues 20 to 28 (KRRIRRRPR). The region spanning 29-76 (NLTILNLPEDALFHILKWLSVGDILAVRAVHSHLKYLVDNHASVWACA) is the F-box domain. The region spanning 291-405 (HAVNKQRVFS…EVVSALDGKI (115 aa)) is the Cyclin N-terminal domain. Short sequence motifs (d box) lie at residues 310–313 (RYIL), 343–346 (RRRL), 349–352 (RYRL), and 351–354 (RLQL). Disordered stretches follow at residues 566–585 (SARR…RGSF) and 700–788 (TSGY…FLKL). The short motif at 568–574 (RRTKRKR) is the Nuclear localization signal 2 element. Residues 582-766 (RGSFVTTPTA…ESCAPQQQVK (185 aa)) form a PEST region. Polar residues-rich tracts occupy residues 700–716 (TSGY…DSGR) and 723–738 (RSTS…NTQP). A D box 5 motif is present at residues 767 to 770 (RKNL).

It belongs to the cyclin family. Cyclin AB subfamily. In terms of assembly, component of the SCF(CCNF) complex consisting of CUL1, RBX1, SKP1 and CCNF. Interacts with SKP1. Interacts with CUL1. Interacts with CCNB1; interaction is required for nuclear localization of CCNB1. Interacts with CCP110; this interaction leads to CCP110 ubiquitination and degradation via the proteasome pathway. Interacts (via the Cyclin N-terminal domain) with MYBL2/BMYB. Interacts with FZR1/CDH1 (via N-terminus). Interacts with RRM2 (via Cy motif and when phosphorylated at 'Thr-33'); the interaction occurs exclusively in G2 and early M. Interacts with CDC6 (via Cy motif); the interaction takes place during G2 and M phase. In terms of processing, degraded when the spindle assembly checkpoint is activated during the G2-M transition. Degradation is not dependent on the proteasome or ubiquitin and depends on the C-terminal PEST sequence. Post-translationally, phosphorylated just before cells enter into mitosis. Ubiquitinated by the anaphase-promoting complex (APC/C); leading to its degradation by the proteasome.

Its subcellular location is the nucleus. The protein resides in the cytoplasm. It is found in the perinuclear region. The protein localises to the cytoskeleton. It localises to the microtubule organizing center. Its subcellular location is the centrosome. The protein resides in the centriole. Functionally, substrate recognition component of a SCF (SKP1-CUL1-F-box protein) E3 ubiquitin-protein ligase complex which mediates the ubiquitination and subsequent proteasomal degradation of target proteins. The SCF(CCNF) E3 ubiquitin-protein ligase complex is an integral component of the ubiquitin proteasome system (UPS) and links proteasome degradation to the cell cycle. Mediates the substrate recognition and the proteasomal degradation of various target proteins involved in the regulation of cell cycle progression and in the maintenance of genome stability. Mediates the ubiquitination and subsequent proteasomal degradation of CP110 during G2 phase, thereby acting as an inhibitor of centrosome reduplication. In G2, mediates the ubiquitination and proteasomal degradation of CDC6, thereby suppressing DNA re-replication and preventing genome instability. Involved in the ubiquitination and degradation of the substrate adapter CDH1 of the anaphase-promoting complex (APC/C), thereby acting as an antagonist of APC/C in regulating G1 progression and S phase entry. May play a role in the G2 cell cycle checkpoint control after DNA damage, possibly by promoting the ubiquitination of MYBL2/BMYB. The polypeptide is Cyclin-F (CCNF) (Bos taurus (Bovine)).